Reading from the N-terminus, the 441-residue chain is EMI domain-containing protein 1 (441 aa).

An N-terminal signal peptide occupies residues 1-22 (MGGPRAWALLCLGLLLPGGGAA). The 74-residue stretch at 33–106 (RRNWCSYVVT…PGHSGVSCEE (74 aa)) folds into the EMI domain. Disulfide bonds link cysteine 37/cysteine 96, cysteine 62/cysteine 68, and cysteine 95/cysteine 104. O-linked (Fuc) threonine glycosylation occurs at threonine 42. Asparagine 51 carries N-linked (GlcNAc...) asparagine glycosylation. A glycan (N-linked (GlcNAc...) asparagine) is linked at asparagine 136. Disordered regions lie at residues 162 to 371 (QPVP…KSHW) and 405 to 441 (SGAG…DERG). Composition is skewed to pro residues over residues 163–184 (PVPP…PPAQ) and 222–231 (PPGPQGPPGS). The 190-residue stretch at 179–368 (GPPPAQGSPG…PGPKGDPGEK (190 aa)) folds into the Collagen-like domain. A compositionally biased stretch (low complexity) spans 232 to 243 (PGRAGAVGTPGE). The span at 244–264 (RGPPGPPGPPGPPGPPAPVGP) shows a compositional bias: pro residues. Positions 277–288 (LSNTFTETNNHW) are enriched in polar residues. Residues 292–311 (PTGPPGPPGPMGPPGPPGPT) show a composition bias toward pro residues. Basic and acidic residues-rich tracts occupy residues 335–344 (PGEKGERGLR) and 359–371 (PGPK…KSHW).

As to quaternary structure, homo- or heteromers. Post-translationally, O-fucosylated at Thr-42 within the EMI domain by FUT10/POFUT3 and FUT11/POFUT4.

It localises to the secreted. It is found in the extracellular space. The protein localises to the extracellular matrix. This is EMI domain-containing protein 1 (EMID1) from Homo sapiens (Human).